The chain runs to 468 residues: Peroxisome proliferator-activated receptor alpha (468 aa).

The nuclear receptor DNA-binding region spans 99–173 (NIECRICGDK…VGMSHNAIRF (75 aa)). NR C4-type zinc fingers lie at residues 102–122 (CRIC…CEGC) and 139–161 (CDRS…FHKC). The 228-residue stretch at 239–466 (FVIHDMETLC…HPLLQEIYRD (228 aa)) folds into the NR LBD domain. The segment at 304-433 (DQVTLLKYGV…PKLLQKMVDL (130 aa)) is required for heterodimerization with RXRA.

The protein belongs to the nuclear hormone receptor family. NR1 subfamily. As to quaternary structure, heterodimer; with RXRA. This heterodimerization is required for DNA binding and transactivation activity. Interacts with NCOA3 coactivator. Interacts with CITED2; the interaction stimulates its transcriptional activity. Also interacts with PPARBP in vitro. Interacts with AKAP13, LPIN1, PRDM16 and coactivator NCOA6. Interacts with ASXL1 and ASXL2. Interacts with PER2. Interacts with SIRT1; the interaction seems to be modulated by NAD(+) levels. Interacts with CRY1 and CRY2. In hepatocytes, interacts with PAQR3 and HUWE1; the interactions promote PPARA poylubiquitination and HUWE1-mediated degradation. Post-translationally, phosphorylated. In terms of processing, ubiquitinated by E3 ubiquitin-protein ligase HUWE1; leading to proteasomal degradation. Expressed predominantly in liver and kidney.

It is found in the nucleus. Functionally, ligand-activated transcription factor. Key regulator of lipid metabolism. Activated by the endogenous ligand 1-palmitoyl-2-oleoyl-sn-glycerol-3-phosphocholine (16:0/18:1-GPC). Activated by oleylethanolamide, a naturally occurring lipid that regulates satiety. Receptor for peroxisome proliferators such as hypolipidemic drugs and fatty acids. Regulates the peroxisomal beta-oxidation pathway of fatty acids. Functions as a transcription activator for the ACOX1 and P450 genes. Transactivation activity requires heterodimerization with RXRA and is antagonized by NR2C2. May be required for the propagation of clock information to metabolic pathways regulated by PER2. This is Peroxisome proliferator-activated receptor alpha (Ppara) from Rattus norvegicus (Rat).